The following is a 401-amino-acid chain: Formate-dependent phosphoribosylglycinamide formyltransferase (401 aa).

N(1)-(5-phospho-beta-D-ribosyl)glycinamide contacts are provided by residues 22-23 and Glu82; that span reads EL. ATP contacts are provided by residues Arg115, Lys157, 162-167, 197-200, and Glu205; these read SSGKGQ and EGFI. The region spanning 120 to 315 is the ATP-grasp domain; sequence RLAAESLGLP…EFELHARAIL (196 aa). Residues Glu274 and Glu286 each coordinate Mg(2+). Residues Asp293, Lys362, and 369–370 each bind N(1)-(5-phospho-beta-D-ribosyl)glycinamide; that span reads RR.

Belongs to the PurK/PurT family. In terms of assembly, homodimer.

It carries out the reaction N(1)-(5-phospho-beta-D-ribosyl)glycinamide + formate + ATP = N(2)-formyl-N(1)-(5-phospho-beta-D-ribosyl)glycinamide + ADP + phosphate + H(+). Its pathway is purine metabolism; IMP biosynthesis via de novo pathway; N(2)-formyl-N(1)-(5-phospho-D-ribosyl)glycinamide from N(1)-(5-phospho-D-ribosyl)glycinamide (formate route): step 1/1. Its function is as follows. Involved in the de novo purine biosynthesis. Catalyzes the transfer of formate to 5-phospho-ribosyl-glycinamide (GAR), producing 5-phospho-ribosyl-N-formylglycinamide (FGAR). Formate is provided by PurU via hydrolysis of 10-formyl-tetrahydrofolate. The sequence is that of Formate-dependent phosphoribosylglycinamide formyltransferase from Cupriavidus necator (strain ATCC 17699 / DSM 428 / KCTC 22496 / NCIMB 10442 / H16 / Stanier 337) (Ralstonia eutropha).